We begin with the raw amino-acid sequence, 357 residues long: MKKSLIALTLAALPVAAMADVTLYGQVKAGVEVSRTKETVNHVSTKNKTATEIADFGSRIGFKGHEHLSNNLNAIWQVEQNTSVAGTDKGWGTRESFIGLEGGFGKVRAGKLNTALKDNSDSVDPWESSDANASVLQFGKLKRVDERKVSVRYDSPVFAGFSASAQYQPRDNANPEDKHVHDVKTRHSFDLGLNYENSGFFGRYAGTFAKRKVLSDDHLELFNSNTTLGSGVYKDYQAHRLVGGYDANNVLVSVAGQYEGFKADVADAKKNERTEVAVTGGYRMGNVMPRLSYAHGFKAKENGVKQGNSQYNQVIVGADYDFSKRTSALVSAGWLKEGKGGDKTQSTAGLVGLRHKF.

An N-terminal signal peptide occupies residues 1-19 (MKKSLIALTLAALPVAAMA).

The protein belongs to the Gram-negative porin family. As to quaternary structure, homotrimer.

Its subcellular location is the cell outer membrane. In terms of biological role, serves as a slightly cation selective porin. In Neisseria sicca, this protein is Major outer membrane protein P.IB (por).